The primary structure comprises 343 residues: Ribosomal RNA small subunit methyltransferase C (343 aa).

The protein belongs to the methyltransferase superfamily. RsmC family. In terms of assembly, monomer.

The protein localises to the cytoplasm. The enzyme catalyses guanosine(1207) in 16S rRNA + S-adenosyl-L-methionine = N(2)-methylguanosine(1207) in 16S rRNA + S-adenosyl-L-homocysteine + H(+). Functionally, specifically methylates the guanine in position 1207 of 16S rRNA in the 30S particle. The protein is Ribosomal RNA small subunit methyltransferase C of Pseudoalteromonas atlantica (strain T6c / ATCC BAA-1087).